A 310-amino-acid polypeptide reads, in one-letter code: Ribosomal RNA small subunit methyltransferase H (310 aa).

S-adenosyl-L-methionine is bound by residues 33–35 (GGH), Asp52, Phe79, Asp98, and Gln105.

This sequence belongs to the methyltransferase superfamily. RsmH family.

The protein resides in the cytoplasm. It catalyses the reaction cytidine(1402) in 16S rRNA + S-adenosyl-L-methionine = N(4)-methylcytidine(1402) in 16S rRNA + S-adenosyl-L-homocysteine + H(+). In terms of biological role, specifically methylates the N4 position of cytidine in position 1402 (C1402) of 16S rRNA. The chain is Ribosomal RNA small subunit methyltransferase H from Campylobacter jejuni subsp. doylei (strain ATCC BAA-1458 / RM4099 / 269.97).